Here is a 458-residue protein sequence, read N- to C-terminus: RuvB-like helicase 1 (458 aa).

Residues 1–29 (MVQISEVKGNSRDNRTAAHTHIKGLGLRP) are disordered. 71–78 (GGPGTGKT) is an ATP binding site.

Belongs to the RuvB family. As to quaternary structure, may form heterododecamers with RVB2. Component of the SWR1 chromatin remodeling complex, the INO80 chromatin remodeling complex, and of the R2TP complex.

It is found in the nucleus. The catalysed reaction is ATP + H2O = ADP + phosphate + H(+). Its function is as follows. DNA helicase which participates in several chromatin remodeling complexes, including the SWR1 and the INO80 complexes. The SWR1 complex mediates the ATP-dependent exchange of histone H2A for the H2A variant HZT1 leading to transcriptional regulation of selected genes by chromatin remodeling. The INO80 complex remodels chromatin by shifting nucleosomes and is involved in DNA repair. Also involved in pre-rRNA processing. The chain is RuvB-like helicase 1 (rvb1) from Emericella nidulans (strain FGSC A4 / ATCC 38163 / CBS 112.46 / NRRL 194 / M139) (Aspergillus nidulans).